A 96-amino-acid chain; its full sequence is Protein Vpr (96 aa).

The tract at residues 1-42 is homooligomerization; that stretch reads MEQAPEDQGPQREPYNEWTLELLEELKNEAVRHFPRIWLHSL. S79, S94, and S96 each carry phosphoserine; by host.

It belongs to the HIV-1 VPR protein family. In terms of assembly, homooligomer, may form homodimer. Interacts with p6-gag region of the Pr55 Gag precursor protein through a (Leu-X-X)4 motif near the C-terminus of the P6gag protein. Interacts with host UNG. May interact with host RAD23A/HHR23A. Interacts with host VPRBP/DCAF1, leading to hijack the CUL4A-RBX1-DDB1-DCAF1/VPRBP complex, mediating ubiquitination of host proteins such as TERT and ZGPAT and arrest of the cell cycle in G2 phase. In terms of processing, phosphorylated on several residues by host. These phosphorylations regulate VPR activity for the nuclear import of the HIV-1 pre-integration complex.

It is found in the virion. It localises to the host nucleus. The protein resides in the host extracellular space. Its function is as follows. During virus replication, may deplete host UNG protein, and incude G2-M cell cycle arrest. Acts by targeting specific host proteins for degradation by the 26S proteasome, through association with the cellular CUL4A-DDB1 E3 ligase complex by direct interaction with host VPRPB/DCAF-1. Cell cycle arrest reportedly occurs within hours of infection and is not blocked by antiviral agents, suggesting that it is initiated by the VPR carried into the virion. Additionally, VPR induces apoptosis in a cell cycle dependent manner suggesting that these two effects are mechanistically linked. Detected in the serum and cerebrospinal fluid of AIDS patient, VPR may also induce cell death to bystander cells. In terms of biological role, during virus entry, plays a role in the transport of the viral pre-integration (PIC) complex to the host nucleus. This function is crucial for viral infection of non-dividing macrophages. May act directly at the nuclear pore complex, by binding nucleoporins phenylalanine-glycine (FG)-repeat regions. This Homo sapiens (Human) protein is Protein Vpr.